We begin with the raw amino-acid sequence, 1218 residues long: Mgp-operon protein 3 (1218 aa).

The N-terminal stretch at 1–25 is a signal peptide; that stretch reads MKSKLKLKRYLLFLPLLPLGTLSLA. 4 disordered regions span residues 109–129, 213–245, 262–353, and 411–440; these read QESQ…SGSN, HFGS…GFKL, EPLD…AVVS, and QDAT…PALT. Over residues 116-129 the composition is skewed to low complexity; that stretch reads NGSQSGSSDTSGSN. The span at 217 to 231 shows a compositional bias: polar residues; that stretch reads GQESSWNSQRSQKGL. Basic and acidic residues predominate over residues 265–286; it reads DSTKEGKGKDESSWKNSEKTTA. Positions 301–342 are enriched in low complexity; that stretch reads AGSASSLQGNGSNSSGLKSLLRSAPVSVPPSSTSNQTLSLSN. Residues 411–428 show a composition bias toward polar residues; sequence QDATSTNLPHAAGASQTG. A helical membrane pass occupies residues 1121 to 1141; that stretch reads VGSSVGILLILLILGLGIGIP. The span at 1192–1204 shows a compositional bias: low complexity; the sequence is NNAAPKAPVKPAA. Residues 1192 to 1218 form a disordered region; the sequence is NNAAPKAPVKPAAPTAPRPPVQPPKKA. Residues 1205–1218 are compositionally biased toward pro residues; that stretch reads PTAPRPPVQPPKKA.

The protein localises to the cell membrane. This chain is Mgp-operon protein 3, found in Mycoplasma pneumoniae (strain ATCC 29342 / M129 / Subtype 1) (Mycoplasmoides pneumoniae).